A 387-amino-acid chain; its full sequence is Cytochrome b (387 aa).

A run of 4 helical transmembrane segments spans residues 32-52, 76-98, 113-133, and 179-199; these read FGSL…TLAM, WLVR…LHIG, VWAI…LGYV, and FFAL…MHLI. Heme b-binding residues include His-82 and His-96. His-183 and His-197 together coordinate heme b. His-202 serves as a coordination point for a ubiquinone. Helical transmembrane passes span 226–246, 290–310, 322–342, and 349–369; these read YLFK…SFVF, LLGV…PITD, LSKF…KLGA, and FIEL…IIVP.

It belongs to the cytochrome b family. As to quaternary structure, fungal cytochrome b-c1 complex contains 10 subunits; 3 respiratory subunits, 2 core proteins and 5 low-molecular weight proteins. Cytochrome b-c1 complex is a homodimer. Heme b is required as a cofactor.

The protein resides in the mitochondrion inner membrane. Functionally, component of the ubiquinol-cytochrome c reductase complex (complex III or cytochrome b-c1 complex) that is part of the mitochondrial respiratory chain. The b-c1 complex mediates electron transfer from ubiquinol to cytochrome c. Contributes to the generation of a proton gradient across the mitochondrial membrane that is then used for ATP synthesis. The chain is Cytochrome b (COB) from Podospora anserina (strain S / ATCC MYA-4624 / DSM 980 / FGSC 10383) (Pleurage anserina).